The sequence spans 2531 residues: Probable polyketide synthase 26 (2531 aa).

Residues 10–433 (QEDIAIIGFR…GSNCCLVLTE (424 aa)) form the Ketosynthase family 3 (KS3) domain. Residues cysteine 174, histidine 316, and histidine 356 each act as for beta-ketoacyl synthase activity in the active site. The interval 620–653 (GINPSFIVGHSLGELPMAFCSGMIDFDTVCYLLY) is acyl/malonyl transferase. The active-site For acyl/malonyl transferase activity is the serine 630. An N-terminal hotdog fold region spans residues 915-1036 (MDTLGFSNEK…ANYHLSHRDD (122 aa)). In terms of domain architecture, PKS/mFAS DH spans 915-1206 (MDTLGFSNEK…LKSLIPLKDP (292 aa)). Catalysis depends on histidine 948, which acts as the Proton acceptor; for dehydratase activity. The C-terminal hotdog fold stretch occupies residues 1055–1206 (NLTKLSKNQF…LKSLIPLKDP (152 aa)). Aspartate 1117 acts as the Proton donor; for dehydratase activity in catalysis. The Carrier domain occupies 2431-2509 (ASENPVKDLL…DNIKILTDSY (79 aa)). Serine 2468 carries the O-(pantetheine 4'-phosphoryl)serine modification.

Pantetheine 4'-phosphate serves as cofactor.

Its function is as follows. Probable polyketide synthase. This Dictyostelium discoideum (Social amoeba) protein is Probable polyketide synthase 26 (pks26).